A 175-amino-acid polypeptide reads, in one-letter code: Dual-action ribosomal maturation protein DarP (175 aa).

Belongs to the DarP family.

The protein resides in the cytoplasm. Member of a network of 50S ribosomal subunit biogenesis factors which assembles along the 30S-50S interface, preventing incorrect 23S rRNA structures from forming. Promotes peptidyl transferase center (PTC) maturation. The polypeptide is Dual-action ribosomal maturation protein DarP (Vibrio parahaemolyticus serotype O3:K6 (strain RIMD 2210633)).